The sequence spans 495 residues: E3 ubiquitin-protein ligase RAD18 (495 aa).

Residue M1 is modified to N-acetylmethionine. The segment at 25 to 64 (CGICFEYFNIAMIIPQCSHNYCSLCIRKFLSYKTQCPTCC) adopts an RING-type zinc-finger fold. 2 positions are modified to phosphoserine: S99 and S103. A Phosphothreonine modification is found at T118. Residues S122, S125, S142, S158, and S164 each carry the phosphoserine modification. The disordered stretch occupies residues 152–197 (ENKSKFSPQKEASPAAKTKETRSVEEIAPDPSEAKRPEPPSTSTLK). A UBZ4-type zinc finger spans residues 201 to 228 (KVDCPVCGVNIPESHINKHLDSCLSREE). C204, C207, H219, and C223 together coordinate Zn(2+). An LR motif motif is present at residues 232 to 240 (SLRSSVHKR). An SAP domain is found at 248 to 282 (YNLLSDRDLKKKLKEHGLSIQGNKQQLIKRHQEFV). Phosphoserine is present on S322. K376 participates in a covalent cross-link: Glycyl lysine isopeptide (Lys-Gly) (interchain with G-Cter in SUMO2). Disordered regions lie at residues 400 to 423 (NHFS…DSSS) and 456 to 495 (AWEA…RNRN). Acidic residues predominate over residues 410-421 (PEELEPDREEDS). Phosphoserine occurs at positions 471 and 483. Over residues 479–495 (RAAESAEIEPRNKRNRN) the composition is skewed to basic and acidic residues.

The protein belongs to the RAD18 family. As to quaternary structure, homodimer. Interacts with UBE2A and UBE2B, one homodimer binding one molecule of UBE2B. Interacts with SHPRH. Interacts with HLTF. Interacts with SPRTN; leading to enhance chromatin association of RAD18 and RAD18-mediated PCNA ubiquitination and translesion DNA synthesis. Interacts (via C-terminus and phosphorylated form) with SLF1 (via BRCT domains); this interaction is required for efficient repair of UV-induced DNA damage. Interacts with SLF2. Interacts with SMC5; this interaction is increased in a SLF1 or SLF2-dependent manner. Interacts with DNA damage up-regulated protein DDUP. Forms a complex with DDUP and H2AX following DDUP phosphorylation.

Its subcellular location is the nucleus. The protein localises to the cytoplasm. The protein resides in the cytoskeleton. It is found in the microtubule organizing center. It localises to the centrosome. It carries out the reaction S-ubiquitinyl-[E2 ubiquitin-conjugating enzyme]-L-cysteine + [acceptor protein]-L-lysine = [E2 ubiquitin-conjugating enzyme]-L-cysteine + N(6)-ubiquitinyl-[acceptor protein]-L-lysine.. It functions in the pathway protein modification; protein ubiquitination. E3 ubiquitin-protein ligase involved in postreplication repair of UV-damaged DNA. Postreplication repair functions in gap-filling of a daughter strand on replication of damaged DNA. Associates to the E2 ubiquitin conjugating enzyme UBE2B to form the UBE2B-RAD18 ubiquitin ligase complex involved in mono-ubiquitination of DNA-associated PCNA on 'Lys-164'. Has ssDNA binding activity. This chain is E3 ubiquitin-protein ligase RAD18 (RAD18), found in Homo sapiens (Human).